Consider the following 199-residue polypeptide: Molybdenum cofactor guanylyltransferase (199 aa).

GTP-binding positions include 12 to 14 (LAG), lysine 25, asparagine 53, aspartate 71, and aspartate 101. Aspartate 101 serves as a coordination point for Mg(2+).

It belongs to the MobA family. In terms of assembly, monomer. Mg(2+) serves as cofactor.

The protein localises to the cytoplasm. The enzyme catalyses Mo-molybdopterin + GTP + H(+) = Mo-molybdopterin guanine dinucleotide + diphosphate. Transfers a GMP moiety from GTP to Mo-molybdopterin (Mo-MPT) cofactor (Moco or molybdenum cofactor) to form Mo-molybdopterin guanine dinucleotide (Mo-MGD) cofactor. In Cupriavidus taiwanensis (strain DSM 17343 / BCRC 17206 / CCUG 44338 / CIP 107171 / LMG 19424 / R1) (Ralstonia taiwanensis (strain LMG 19424)), this protein is Molybdenum cofactor guanylyltransferase.